We begin with the raw amino-acid sequence, 733 residues long: DNA-binding protein SATB2 (733 aa).

Positions 1–47 are disordered; it reads MERRSESPCLRDSPDRRSGSPDVKGPPPVKVARLEQNGSPMGARGRP. Serine 20 bears the Phosphoserine mark. Glycyl lysine isopeptide (Lys-Gly) (interchain with G-Cter in SUMO2) cross-links involve residues lysine 24 and lysine 30. Residue serine 39 is modified to Phosphoserine. The CMP domain occupies 57-158; that stretch reads GLMIPVFCVV…VVTLKIQLQS (102 aa). Lysine 161 participates in a covalent cross-link: Glycyl lysine isopeptide (Lys-Gly) (interchain with G-Cter in SUMO2). A CUTL domain is found at 161–234; it reads KLEDLPAEQW…WYKKYKKIKV (74 aa). A Glycyl lysine isopeptide (Lys-Gly) (interchain with G-Cter in SUMO) cross-link involves residue lysine 233. A Glycyl lysine isopeptide (Lys-Gly) (interchain with G-Cter in SUMO); alternate cross-link involves residue lysine 350. A Glycyl lysine isopeptide (Lys-Gly) (interchain with G-Cter in SUMO2); alternate cross-link involves residue lysine 350. Residues 350–437 constitute a DNA-binding region (CUT 1); the sequence is KPEPTNSSVE…ERDRIYQDER (88 aa). Residues 435–473 are disordered; the sequence is DERERSMNPNVSMVSSASSSPSSSRTPQAKTSTPTTDLP. Low complexity predominate over residues 441 to 458; sequence MNPNVSMVSSASSSPSSS. Serine 454 bears the Phosphoserine mark. A compositionally biased stretch (polar residues) spans 459–470; sequence RTPQAKTSTPTT. A Phosphothreonine modification is found at threonine 467. Positions 473-560 form a DNA-binding region, CUT 2; sequence PIKVDGANVN…ERDVIYEEES (88 aa). Lysine 475 is covalently cross-linked (Glycyl lysine isopeptide (Lys-Gly) (interchain with G-Cter in SUMO2)). Disordered regions lie at residues 580 to 617 and 691 to 733; these read QVLHRQQSQPTKESSPPREEAPPPPPPTEDSCAKKPRS and DEEL…TDQR. Residue serine 594 is modified to Phosphoserine. Residues 615–674 constitute a DNA-binding region (homeobox); sequence PRSRTKISLEALGILQSFIHDVGLYPDQEAIHTLSAQLDLPKHTIIKFFQNQRYHVKHHG. The span at 694-708 shows a compositional bias: acidic residues; that stretch reads LLTESEENDSEEGSE. Residues 709 to 733 show a composition bias toward basic and acidic residues; that stretch reads EMYKVEAEEENADKSKAAPAETDQR. Lysine 724 is covalently cross-linked (Glycyl lysine isopeptide (Lys-Gly) (interchain with G-Cter in SUMO2)).

Belongs to the CUT homeobox family. In terms of assembly, interacts with PIAS1. Interacts with ATF4 and RUNX2; resulting in enhanced DNA binding and transactivation by these transcription factors. Post-translationally, sumoylated by PIAS1. Sumoylation promotes nuclear localization, but represses transcription factor activity. In terms of tissue distribution, expressed in cortical neurons that extend axons across the corpus callosum. Also expressed in branchial arches and in cells of the osteoblast lineage, but not in chondrocytes and osteoclasts.

The protein resides in the nucleus matrix. In terms of biological role, binds to DNA, at nuclear matrix- or scaffold-associated regions. Thought to recognize the sugar-phosphate structure of double-stranded DNA. Transcription factor controlling nuclear gene expression, by binding to matrix attachment regions (MARs) of DNA and inducing a local chromatin-loop remodeling. Acts as a docking site for several chromatin remodeling enzymes and also by recruiting corepressors (HDACs) or coactivators (HATs) directly to promoters and enhancers. Required for the initiation of the upper-layer neurons (UL1) specific genetic program and for the inactivation of deep-layer neurons (DL) and UL2 specific genes, probably by modulating Bcl11b expression. Repressor of Ctip2 and regulatory determinant of corticocortical connections in the developing cerebral cortex. May play an important role in palate formation. Acts as a molecular node in a transcriptional network regulating skeletal development and osteoblast differentiation. The chain is DNA-binding protein SATB2 (Satb2) from Mus musculus (Mouse).